Here is a 982-residue protein sequence, read N- to C-terminus: Polyribonucleotide nucleotidyltransferase 2, mitochondrial (982 aa).

Residues 1-39 (MSMAVASLRLLARGGRRRARFPAPLSVPGGRAAFLSGAA) constitute a mitochondrion transit peptide. Residues 624 to 678 (PRLATLSFSSDSLRKLLFHRKKIEQETGARVSVSDGTVTIVAKTQPIMDKAIEKV) enclose the KH domain. One can recognise an S1 motif 1 domain in the interval 689–757 (GRTYKGVVSS…LRGNIKLSLK (69 aa)). Disordered regions lie at residues 792-814 (PSKD…EETP) and 832-892 (QDVT…NDVL). 2 stretches are compositionally biased toward low complexity: residues 846–855 (AKSSPKLSKP) and 868–877 (KKTSGASTTA). In terms of domain architecture, S1 motif 2 spans 920 to 982 (GDVVTAKVYQ…KGIPVFSLLD (63 aa)).

It belongs to the polyribonucleotide nucleotidyltransferase family.

It is found in the mitochondrion. It catalyses the reaction RNA(n+1) + phosphate = RNA(n) + a ribonucleoside 5'-diphosphate. Its function is as follows. Involved in the 3'-end maturation of mitochondrial mRNAs, rRNAs and tRNAs. Functions as a poly(A) mRNA 3'-5' degrading phosphorylase. The polypeptide is Polyribonucleotide nucleotidyltransferase 2, mitochondrial (PNP2) (Oryza sativa subsp. japonica (Rice)).